A 282-amino-acid polypeptide reads, in one-letter code: MKLCYQNIQITELVNDWHEQEKTIAFIPTMGGLHQGHLSLIDIAKQKADKVVVSIFVNPAQFDKNEDLDSYPRSLNADLVELEENVDSVFVPDVKQIYPNGISKYIDVGMIGRILCGKTRPHFFNGMIQVVEILFEIVRPNVAIFGQKDYQQLLVIKQMVKNLSLDICIESGEIIREKSGLAMSTRNQYLSENDAKIAANLYRILTYVKHEVLQNKKIDVLKKMAESDLKQHFKLDYLEVLDANTLKQITDNTCQIIILSAVFLGSVRLIDNIIFLKKDNYV.

30 to 37 (MGGLHQGH) contacts ATP. Catalysis depends on His-37, which acts as the Proton donor. Residue Gln-61 coordinates (R)-pantoate. Gln-61 lines the beta-alanine pocket. 146-149 (GQKD) is a binding site for ATP. Gln-152 provides a ligand contact to (R)-pantoate. ATP-binding positions include Ile-175 and 183–186 (MSTR).

This sequence belongs to the pantothenate synthetase family. Homodimer.

It is found in the cytoplasm. It catalyses the reaction (R)-pantoate + beta-alanine + ATP = (R)-pantothenate + AMP + diphosphate + H(+). It participates in cofactor biosynthesis; (R)-pantothenate biosynthesis; (R)-pantothenate from (R)-pantoate and beta-alanine: step 1/1. Functionally, catalyzes the condensation of pantoate with beta-alanine in an ATP-dependent reaction via a pantoyl-adenylate intermediate. This chain is Pantothenate synthetase, found in Vesicomyosocius okutanii subsp. Calyptogena okutanii (strain HA).